The chain runs to 446 residues: MPGVAVKLYSVFFKLLLKHRLQNLISISAADGLSDSFGVSTRSDESVAAANPSFTDGVATKDIHIDPMTSLTVRIFLPESALSPEPDSLRHKDNYNHQPRSDRRHSYGPNHNSPAPAERNESRRNSYGCNNENLEPYGGYAPSAKRNSRKLPVMLQFHGGGWVSGSSDSAANDFFCRRIAKVCDVIVLAVGYRLAPENRYPAAFEDGVKVLHWLGKQANLADCCKSLGNRRVNGVEVKKLNVQGQIVDAFGASMVEPWLAAHADPSRCVLLGVSCGGNIADYVARKAVEAGKLLEPVKVVAQVLMYPFFIGNNPTQSEIKLANSYFYDKPVSVLAWKLFLPEKEFDFDHPAANPLAHNRSGPPLKLMPPTLTVVAEHDWMRDRAIAYSEELRKVNVDSPVLEYKDAVHEFATLDMLLKTPQAQACAEDIAIWVKKYISLRGHEFSY.

A disordered region spans residues Pro-84–Asn-131. Basic and acidic residues predominate over residues Asp-87 to His-105. The Involved in the stabilization of the negatively charged intermediate by the formation of the oxyanion hole motif lies at His-158–Gly-160. Active-site residues include Ser-274, Asp-378, and His-408.

This sequence belongs to the 'GDXG' lipolytic enzyme family. Expressed in roots, leaves, stems, flowers and siliques.

It carries out the reaction a carboxylic ester + H2O = an alcohol + a carboxylate + H(+). Its function is as follows. Carboxylesterase acting on esters with varying acyl chain length. This chain is Probable carboxylesterase 16 (CXE16), found in Arabidopsis thaliana (Mouse-ear cress).